The primary structure comprises 368 residues: sn-1 linoleoyl-lipid 6-desaturase (368 aa).

Helical transmembrane passes span 47 to 67 (IILA…DVLW) and 68 to 88 (MKLL…FNIS). The Histidine box-1 motif lies at 89–93 (HDGNH). The Histidine box-2 motif lies at 124–129 (HNVLHH). The next 3 membrane-spanning stretches (helical) occupy residues 164–184 (WFIW…DVQT), 204–224 (IATL…IPIA), and 233–253 (VIGA…VFML). The short motif at 305–309 (HHLFP) is the Histidine box-3 element.

It belongs to the fatty acid desaturase type 2 family. It depends on Fe(2+) as a cofactor.

The protein resides in the cell inner membrane. The protein localises to the cellular thylakoid membrane. The catalysed reaction is a 1-[(9Z,12Z)-octadecdienoyl]-2-acyl-glycerolipid + 2 reduced [2Fe-2S]-[ferredoxin] + O2 + 2 H(+) = a 1-[(6Z,9Z,12Z)-octadectrienoyl]-2-acyl-glycerolipid + 2 oxidized [2Fe-2S]-[ferredoxin] + 2 H2O. The protein operates within lipid metabolism; polyunsaturated fatty acid biosynthesis. With respect to regulation, activity requires ferredoxin, which is the natural electron donor, or cytochrome b5. In addition, activity is increased in the presence of the intermediate electron donors, NADPH and FADH(2). In terms of biological role, desaturase involved in fatty acid biosynthesis. Introduces a double bond at carbon 6 of linoleoyl group (18:2) attached to the sn-1 position of the glycerol moiety of membrane glycerolipids, leading to the formation of gamma-linolenic acid (GLA). This is sn-1 linoleoyl-lipid 6-desaturase from Arthrospira platensis (Spirulina platensis).